The following is a 416-amino-acid chain: POC1 centriolar protein homolog A (416 aa).

7 WD repeats span residues 16–55 (GHRD…RAYR), 58–97 (GHKD…ESVL), 100–139 (AHTG…IICT), 142–181 (EHNN…LIHT), 184–223 (EPGG…LLQH), 226–265 (VHSA…LLYT), and 268–307 (GHQG…VDYS). The tract at residues 311–340 (QQKRDHRTPSAQASGAAGDPESRSGQKTEV) is disordered. Residues 380–412 (QLDVLTQTVAILEQRLTLTEDKLKECLEQQHQA) are a coiled coil.

It belongs to the WD repeat POC1 family.

May play an important role in centriole assembly and/or stability and ciliogenesis. The protein is POC1 centriolar protein homolog A of Danio rerio (Zebrafish).